The following is a 566-amino-acid chain: Hemocyanin B chain (566 aa).

Cys82 and Cys87 are oxidised to a cystine. Cu cation contacts are provided by His183, His187, His213, His309, His313, and His347.

This sequence belongs to the tyrosinase family. Hemocyanin subfamily. As to expression, hemolymph.

The protein localises to the secreted. The protein resides in the extracellular space. Hemocyanins are copper-containing oxygen carriers occurring freely dissolved in the hemolymph of many mollusks and arthropods. In Astacus leptodactylus (Turkish narrow-clawed crayfish), this protein is Hemocyanin B chain.